Here is a 200-residue protein sequence, read N- to C-terminus: Probable GTP-binding protein EngB (200 aa).

In terms of domain architecture, EngB-type G spans 22–194 (TLPEVAFVGR…WKEVLRLTLA (173 aa)). GTP contacts are provided by residues 30–37 (GRSNVGKS), 57–61 (GRTQL), 75–78 (DLPG), 142–145 (TKCD), and 173–175 (FSA). Residues serine 37 and threonine 59 each coordinate Mg(2+).

This sequence belongs to the TRAFAC class TrmE-Era-EngA-EngB-Septin-like GTPase superfamily. EngB GTPase family. It depends on Mg(2+) as a cofactor.

Necessary for normal cell division and for the maintenance of normal septation. The protein is Probable GTP-binding protein EngB of Pelobacter propionicus (strain DSM 2379 / NBRC 103807 / OttBd1).